Consider the following 199-residue polypeptide: Recombination protein RecR (199 aa).

The C4-type zinc-finger motif lies at 57–72 (CTVCGHITDIDPCAIC). The Toprim domain maps to 80–176 (TVVCVVQDSR…RVTRLAHGLP (97 aa)).

This sequence belongs to the RecR family.

In terms of biological role, may play a role in DNA repair. It seems to be involved in an RecBC-independent recombinational process of DNA repair. It may act with RecF and RecO. This is Recombination protein RecR from Exiguobacterium sp. (strain ATCC BAA-1283 / AT1b).